We begin with the raw amino-acid sequence, 240 residues long: UDP-2,3-diacylglucosamine hydrolase (240 aa).

Mn(2+) is bound by residues Asp-9, His-11, Asp-43, Asn-81, and His-116. A substrate-binding site is contributed by 81-82 (NR). Positions 124, 162, 166, 169, and 197 each coordinate substrate. Mn(2+) contacts are provided by His-197 and His-199.

It belongs to the LpxH family. The cofactor is Mn(2+).

The protein localises to the cell inner membrane. It carries out the reaction UDP-2-N,3-O-bis[(3R)-3-hydroxytetradecanoyl]-alpha-D-glucosamine + H2O = 2-N,3-O-bis[(3R)-3-hydroxytetradecanoyl]-alpha-D-glucosaminyl 1-phosphate + UMP + 2 H(+). It participates in glycolipid biosynthesis; lipid IV(A) biosynthesis; lipid IV(A) from (3R)-3-hydroxytetradecanoyl-[acyl-carrier-protein] and UDP-N-acetyl-alpha-D-glucosamine: step 4/6. Functionally, hydrolyzes the pyrophosphate bond of UDP-2,3-diacylglucosamine to yield 2,3-diacylglucosamine 1-phosphate (lipid X) and UMP by catalyzing the attack of water at the alpha-P atom. Involved in the biosynthesis of lipid A, a phosphorylated glycolipid that anchors the lipopolysaccharide to the outer membrane of the cell. This is UDP-2,3-diacylglucosamine hydrolase from Neisseria meningitidis serogroup B (strain ATCC BAA-335 / MC58).